Consider the following 799-residue polypeptide: Putative mRNA-capping enzyme P5 (799 aa).

Belongs to the phytoreovirus protein P5 family.

It is found in the virion. Its subcellular location is the host cytoplasm. The catalysed reaction is a 5'-end diphospho-ribonucleoside in mRNA + GTP + H(+) = a 5'-end (5'-triphosphoguanosine)-ribonucleoside in mRNA + diphosphate. The protein operates within mRNA processing; mRNA capping. Functionally, enzyme involved in mRNA capping (Potential). Binds to GTP and might have guanylyltransferase activity. Together with the RNA-directed RNA polymerase P1 and protein P7, forms an transcriptional complex positioned near the channels situated at each of the five-fold vertices of the core. This Nephotettix cincticeps (Green rice leafhopper) protein is Putative mRNA-capping enzyme P5.